The following is a 63-amino-acid chain: Conotoxin LeDr243 (63 aa).

The first 22 residues, Met1 to Ala22, serve as a signal peptide directing secretion. The propeptide occupies Arg23 to Ser47. The residue at position 60 (Cys60) is a Cysteine amide. A propeptide spanning residues Leu62–Gly63 is cleaved from the precursor.

It belongs to the conotoxin T superfamily. Contains 2 disulfide bonds that can be either 'C1-C3, C2-C4' or 'C1-C4, C2-C3', since these disulfide connectivities have been observed for conotoxins with cysteine framework V (for examples, see AC P0DQQ7 and AC P81755). In terms of tissue distribution, expressed by the venom duct.

It localises to the secreted. This is Conotoxin LeDr243 from Conus litteratus (Lettered cone).